We begin with the raw amino-acid sequence, 1195 residues long: Error-prone DNA polymerase (1195 aa).

A disordered region spans residues 1163–1195 (ALNGDRRDTPDAPAQRHRHPRDVRILPPSRDFH).

This sequence belongs to the DNA polymerase type-C family. DnaE2 subfamily.

The protein localises to the cytoplasm. The catalysed reaction is DNA(n) + a 2'-deoxyribonucleoside 5'-triphosphate = DNA(n+1) + diphosphate. In terms of biological role, DNA polymerase involved in damage-induced mutagenesis and translesion synthesis (TLS). It is not the major replicative DNA polymerase. The sequence is that of Error-prone DNA polymerase from Rhodopseudomonas palustris (strain ATCC BAA-98 / CGA009).